A 508-amino-acid chain; its full sequence is Photosystem II CP47 reaction center protein (508 aa).

The next 6 membrane-spanning stretches (helical) occupy residues 21 to 36, 101 to 115, 140 to 156, 203 to 218, 237 to 252, and 457 to 472; these read SVHI…WAGS, IVFS…IWHW, GIHL…FGAF, IAAG…FHLS, VLSS…AFVV, and TFAL…HGAR.

This sequence belongs to the PsbB/PsbC family. PsbB subfamily. As to quaternary structure, PSII is composed of 1 copy each of membrane proteins PsbA, PsbB, PsbC, PsbD, PsbE, PsbF, PsbH, PsbI, PsbJ, PsbK, PsbL, PsbM, PsbT, PsbX, PsbY, PsbZ, Psb30/Ycf12, at least 3 peripheral proteins of the oxygen-evolving complex and a large number of cofactors. It forms dimeric complexes. Binds multiple chlorophylls. PSII binds additional chlorophylls, carotenoids and specific lipids. serves as cofactor.

It localises to the plastid. The protein localises to the chloroplast thylakoid membrane. One of the components of the core complex of photosystem II (PSII). It binds chlorophyll and helps catalyze the primary light-induced photochemical processes of PSII. PSII is a light-driven water:plastoquinone oxidoreductase, using light energy to abstract electrons from H(2)O, generating O(2) and a proton gradient subsequently used for ATP formation. In Zea mays (Maize), this protein is Photosystem II CP47 reaction center protein.